The chain runs to 157 residues: Cyclic pyranopterin monophosphate synthase (157 aa).

Substrate is bound by residues Met74–His76 and Met112–Glu113. Asp127 is an active-site residue.

It belongs to the MoaC family. As to quaternary structure, homohexamer; trimer of dimers.

The enzyme catalyses (8S)-3',8-cyclo-7,8-dihydroguanosine 5'-triphosphate = cyclic pyranopterin phosphate + diphosphate. Its pathway is cofactor biosynthesis; molybdopterin biosynthesis. In terms of biological role, catalyzes the conversion of (8S)-3',8-cyclo-7,8-dihydroguanosine 5'-triphosphate to cyclic pyranopterin monophosphate (cPMP). In Campylobacter jejuni (strain RM1221), this protein is Cyclic pyranopterin monophosphate synthase.